Here is a 410-residue protein sequence, read N- to C-terminus: Putative nickel insertion protein (410 aa).

It belongs to the LarC family.

The sequence is that of Putative nickel insertion protein from Cyanothece sp. (strain PCC 7425 / ATCC 29141).